A 362-amino-acid chain; its full sequence is O-methyltransferase 13 (362 aa).

Positions 181, 205, 228, 248, and 262 each coordinate S-adenosyl-L-homocysteine. Asp228 provides a ligand contact to S-adenosyl-L-methionine. Catalysis depends on His266, which acts as the Proton acceptor.

It belongs to the class I-like SAM-binding methyltransferase superfamily. Cation-independent O-methyltransferase family. As to quaternary structure, homodimer. Mainly expressed in vascular and cortical tissues.

It carries out the reaction dopamine + S-adenosyl-L-methionine = 3-methoxytyramine + S-adenosyl-L-homocysteine + H(+). It functions in the pathway aromatic compound metabolism. The protein operates within alkaloid biosynthesis. Functionally, O-methyltransferase participating in the biosynthesis of natural products derived from phenylethylamine, including mescaline, a natural hallucinogen potentially used in psychotherapeutic treatments. Catalyzes the O-methylation of dopamine and 4,5-dihydroxy-3-methoxyphenethylamine. The protein is O-methyltransferase 13 of Lophophora williamsii (Peyote).